The sequence spans 204 residues: Rho GDP-dissociation inhibitor 1 (204 aa).

Residues 1 to 36 (MAEQEPTAEQLAQIAAENEEDEHSVNYKPPAQKSIQ) are disordered. Residue Ala-2 is modified to N-acetylalanine. Ser-34 carries the post-translational modification Phosphoserine. Lys-43 is subject to N6-acetyllysine. A Phosphoserine modification is found at Ser-47. N6-acetyllysine is present on residues Lys-105 and Lys-127. Glycyl lysine isopeptide (Lys-Gly) (interchain with G-Cter in SUMO1); alternate cross-links involve residues Lys-138 and Lys-141. Glycyl lysine isopeptide (Lys-Gly) (interchain with G-Cter in SUMO2); alternate cross-links involve residues Lys-138 and Lys-141. Lys-141 is modified (N6-acetyllysine; alternate). N6-succinyllysine; alternate is present on Lys-141. Lys-178 carries the N6-acetyllysine modification.

The protein belongs to the Rho GDI family. Monomer. Interacts with FER. Interacts with PLXNB3. Forms a heterodimer with RAC1. Interacts with RHOA, the affinity is increased by three orders of magnitude when RHOA is prenylated. Interacts with PSMD10; the interaction increases ARHGDIA association with RHOA, leading to ARHGDIA-mediated inactivation of RHOA and ROCK and prolonged AKT activation. Interacts with KANK2; the interaction is direct and may regulate the interaction of ARHGDIA with RHOA, RAC1 and CDC42. Interacts with RHOC. Interacts with CDC42. Interacts with NGFR (via death domain); NGFR binding decreases the affinity for RHOA. In terms of tissue distribution, in kidney glomerulus, expressed in podocytes and mesangial cells.

It localises to the cytoplasm. Controls Rho proteins homeostasis. Regulates the GDP/GTP exchange reaction of the Rho proteins by inhibiting the dissociation of GDP from them, and the subsequent binding of GTP to them. Retains Rho proteins such as CDC42, RAC1 and RHOA in an inactive cytosolic pool, regulating their stability and protecting them from degradation. Actively involved in the recycling and distribution of activated Rho GTPases in the cell, mediates extraction from membranes of both inactive and activated molecules due its exceptionally high affinity for prenylated forms. Through the modulation of Rho proteins, may play a role in cell motility regulation. In glioma cells, inhibits cell migration and invasion by mediating the signals of SEMA5A and PLXNB3 that lead to inactivation of RAC1. The sequence is that of Rho GDP-dissociation inhibitor 1 (Arhgdia) from Mus musculus (Mouse).